A 210-amino-acid polypeptide reads, in one-letter code: UPF0301 protein M446_6268 (210 aa).

Belongs to the UPF0301 (AlgH) family.

This chain is UPF0301 protein M446_6268, found in Methylobacterium sp. (strain 4-46).